The sequence spans 141 residues: ATP synthase epsilon chain (141 aa).

It belongs to the ATPase epsilon chain family. F-type ATPases have 2 components, CF(1) - the catalytic core - and CF(0) - the membrane proton channel. CF(1) has five subunits: alpha(3), beta(3), gamma(1), delta(1), epsilon(1). CF(0) has three main subunits: a, b and c.

The protein localises to the cell inner membrane. Its function is as follows. Produces ATP from ADP in the presence of a proton gradient across the membrane. The polypeptide is ATP synthase epsilon chain (Burkholderia thailandensis (strain ATCC 700388 / DSM 13276 / CCUG 48851 / CIP 106301 / E264)).